The sequence spans 396 residues: Phosphopentomutase (396 aa).

6 residues coordinate Mn(2+): D14, D286, H291, D327, H328, and H339.

This sequence belongs to the phosphopentomutase family. It depends on Mn(2+) as a cofactor.

It localises to the cytoplasm. The catalysed reaction is 2-deoxy-alpha-D-ribose 1-phosphate = 2-deoxy-D-ribose 5-phosphate. It carries out the reaction alpha-D-ribose 1-phosphate = D-ribose 5-phosphate. Its pathway is carbohydrate degradation; 2-deoxy-D-ribose 1-phosphate degradation; D-glyceraldehyde 3-phosphate and acetaldehyde from 2-deoxy-alpha-D-ribose 1-phosphate: step 1/2. Functionally, isomerase that catalyzes the conversion of deoxy-ribose 1-phosphate (dRib-1-P) and ribose 1-phosphate (Rib-1-P) to deoxy-ribose 5-phosphate (dRib-5-P) and ribose 5-phosphate (Rib-5-P), respectively. This Staphylococcus carnosus (strain TM300) protein is Phosphopentomutase.